A 532-amino-acid chain; its full sequence is Wee1-like protein kinase 2 (532 aa).

The interval 123-166 (INPFTPDTVRRNSEHYKRKSQRSDDDEDYGPRSKEIQNSSEDES) is disordered. Positions 188–465 (FLELACIGVG…RHDVLCKERA (278 aa)) constitute a Protein kinase domain. ATP-binding positions include 194 to 202 (IGVGEFGSV) and Lys217. Residue Asp315 is the Proton acceptor of the active site. Positions 320 and 354 each coordinate Mg(2+). The stretch at 469 to 495 (ATQLRKELNVEKFRTAMLERELKEARL) forms a coiled coil.

This sequence belongs to the protein kinase superfamily. Ser/Thr protein kinase family. WEE1 subfamily.

The protein localises to the nucleus. It catalyses the reaction L-tyrosyl-[protein] + ATP = O-phospho-L-tyrosyl-[protein] + ADP + H(+). Its function is as follows. Oocyte-specific protein tyrosine kinase that phosphorylates and inhibits cdk1 and acts as a key regulator of meiosis. Required to maintain meiotic arrest in oocytes by phosphorylating cdk1 at 'Tyr-15', leading to inhibit cdk1 activity and prevent meiotic reentry. This is Wee1-like protein kinase 2 (wee2) from Danio rerio (Zebrafish).